The primary structure comprises 111 residues: Ribosome-binding factor A (111 aa).

It belongs to the RbfA family. As to quaternary structure, monomer. Binds 30S ribosomal subunits, but not 50S ribosomal subunits or 70S ribosomes.

Its subcellular location is the cytoplasm. Functionally, one of several proteins that assist in the late maturation steps of the functional core of the 30S ribosomal subunit. Associates with free 30S ribosomal subunits (but not with 30S subunits that are part of 70S ribosomes or polysomes). Required for efficient processing of 16S rRNA. May interact with the 5'-terminal helix region of 16S rRNA. The sequence is that of Ribosome-binding factor A from Helicobacter pylori (strain G27).